The primary structure comprises 394 residues: Nuclear pore glycoprotein p62 (394 aa).

Tandem repeats lie at residues 22 to 23, 50 to 51, 75 to 76, 77 to 78, and 116 to 117. Residues 22–117 are 5 X 2 AA repeats of F-G; that stretch reads FGLSTGTPAA…GTSAAPPAFG (96 aa). A compositionally biased stretch (low complexity) spans 45 to 57; that stretch reads KTTFSFGTPAPTA. Residues 45-73 form a disordered region; the sequence is KTTFSFGTPAPTAGIGGGDADNSKAQAPP. Residues 211-341 are a coiled coil; that stretch reads SYHQLEEHIN…DNLNEANKGQ (131 aa).

Belongs to the nucleoporin NSP1/NUP62 family. As to expression, expressed in adult male accessory glands (at protein level).

It is found in the nucleus. The protein resides in the chromosome. It localises to the nucleus envelope. The protein localises to the nuclear pore complex. Its subcellular location is the cytoplasm. It is found in the cytoskeleton. The protein resides in the spindle pole. It localises to the microtubule organizing center. The protein localises to the centrosome. Its function is as follows. Essential component of the nuclear pore complex. The N-terminal is probably involved in nucleocytoplasmic transport. The C-terminal is involved in protein-protein interaction probably via coiled-coil formation, promotes its association with centrosomes and may function in anchorage of Nup62 to the pore complex. Binds to transcriptionally active genes. Negatively regulates chromatin attachment to the nuclear envelope, probably by preventing chromatin tethering by Nup154. The polypeptide is Nuclear pore glycoprotein p62 (Drosophila melanogaster (Fruit fly)).